The sequence spans 357 residues: Protein RecA (357 aa).

73–80 (GPESSGKT) is an ATP binding site.

This sequence belongs to the RecA family.

It localises to the cytoplasm. Functionally, can catalyze the hydrolysis of ATP in the presence of single-stranded DNA, the ATP-dependent uptake of single-stranded DNA by duplex DNA, and the ATP-dependent hybridization of homologous single-stranded DNAs. It interacts with LexA causing its activation and leading to its autocatalytic cleavage. In Nitratidesulfovibrio vulgaris (strain ATCC 29579 / DSM 644 / CCUG 34227 / NCIMB 8303 / VKM B-1760 / Hildenborough) (Desulfovibrio vulgaris), this protein is Protein RecA.